A 408-amino-acid chain; its full sequence is Cytochrome bc1 complex Rieske iron-sulfur subunit (408 aa).

3 consecutive transmembrane segments (helical) span residues 56–76 (VTFWLVLGIIGGLGFLATYIF), 98–118 (MLGITSGLCILSLGFAVVLYV), and 162–182 (LIMGLAGGGAVLAGLTIIAPM). In terms of domain architecture, Rieske spans 293 to 390 (HGPRNAVMLI…ITVDEEGYLI (98 aa)). [2Fe-2S] cluster-binding residues include Cys333, His335, Cys352, and His355. An intrachain disulfide couples Cys338 to Cys354.

It belongs to the Rieske iron-sulfur protein family. The cytochrome bc1 complex is composed of a cytochrome b (QcrB), the Rieske iron-sulfur protein (QcrA) and a diheme cytochrome c (QcrC) subunit. The bc1 complex forms a supercomplex with cytochrome c oxidase (cytochrome aa3). [2Fe-2S] cluster is required as a cofactor.

Its subcellular location is the cell membrane. Iron-sulfur subunit of the cytochrome bc1 complex, an essential component of the respiratory electron transport chain required for ATP synthesis. The bc1 complex catalyzes the oxidation of menaquinol and the reduction of cytochrome c in the respiratory chain. The bc1 complex operates through a Q-cycle mechanism that couples electron transfer to generation of the proton gradient that drives ATP synthesis. This is Cytochrome bc1 complex Rieske iron-sulfur subunit (qcrA) from Corynebacterium glutamicum (strain ATCC 13032 / DSM 20300 / JCM 1318 / BCRC 11384 / CCUG 27702 / LMG 3730 / NBRC 12168 / NCIMB 10025 / NRRL B-2784 / 534).